The chain runs to 274 residues: Undecaprenyl-diphosphatase (274 aa).

A run of 8 helical transmembrane segments spans residues 4–24, 46–66, 86–106, 109–129, 145–165, 188–208, 214–234, and 250–270; these read LLVI…LLPI, VVFE…EYRV, INVA…SDFI, VLFS…IIMW, ISYA…IPGT, FSFF…LWEA, IEDM…TFAV, and FAWY…TGVI.

Belongs to the UppP family.

It is found in the cell inner membrane. It catalyses the reaction di-trans,octa-cis-undecaprenyl diphosphate + H2O = di-trans,octa-cis-undecaprenyl phosphate + phosphate + H(+). Functionally, catalyzes the dephosphorylation of undecaprenyl diphosphate (UPP). Confers resistance to bacitracin. This chain is Undecaprenyl-diphosphatase, found in Cellvibrio japonicus (strain Ueda107) (Pseudomonas fluorescens subsp. cellulosa).